Consider the following 134-residue polypeptide: GSH-induced LITAF domain protein (134 aa).

The region spanning 33 to 113 (DPLGAPIQQT…CGNKVADFEK (81 aa)) is the LITAF domain. Zn(2+) is bound by residues C53 and C56. The tract at residues 68 to 88 (PGVAAVVACMMPFMLGFCFLC) is membrane-binding amphipathic helix. Residues C101 and C104 each contribute to the Zn(2+) site.

The protein belongs to the CDIP1/LITAF family. In terms of assembly, interacts (via N- and C-terminal) with MIEL1 and LSD1 (via N-terminus).

It is found in the cell membrane. Acts as a membrane anchor, bringing other regulators of programmed cell death (PCD) to the plasma membrane. Negatively regulates hypersensitive cell death. In Arabidopsis thaliana (Mouse-ear cress), this protein is GSH-induced LITAF domain protein.